We begin with the raw amino-acid sequence, 98 residues long: uncharacterized protein (98 aa).

The segment covering 1 to 10 (MARRRKPLHR) has biased composition (basic residues). Positions 1–21 (MARRRKPLHRQRPEPPSWALR) are disordered.

This is an uncharacterized protein from Mycobacterium bovis (strain ATCC BAA-935 / AF2122/97).